We begin with the raw amino-acid sequence, 709 residues long: Phosphoribosylformylglycinamidine synthase subunit PurL (709 aa).

H36 is a catalytic residue. 2 residues coordinate ATP: Y39 and K80. Residue E82 participates in Mg(2+) binding. Substrate-binding positions include 83–86 (SHNH) and R105. The active-site Proton acceptor is H84. D106 is a binding site for Mg(2+). Position 226 (Q226) interacts with substrate. Position 252 (D252) interacts with Mg(2+). 294–296 (ETQ) serves as a coordination point for substrate. Residues D470 and G507 each coordinate ATP. Residue S510 coordinates substrate.

The protein belongs to the FGAMS family. In terms of assembly, monomer. Part of the FGAM synthase complex composed of 1 PurL, 1 PurQ and 2 PurS subunits.

It is found in the cytoplasm. The enzyme catalyses N(2)-formyl-N(1)-(5-phospho-beta-D-ribosyl)glycinamide + L-glutamine + ATP + H2O = 2-formamido-N(1)-(5-O-phospho-beta-D-ribosyl)acetamidine + L-glutamate + ADP + phosphate + H(+). Its pathway is purine metabolism; IMP biosynthesis via de novo pathway; 5-amino-1-(5-phospho-D-ribosyl)imidazole from N(2)-formyl-N(1)-(5-phospho-D-ribosyl)glycinamide: step 1/2. In terms of biological role, part of the phosphoribosylformylglycinamidine synthase complex involved in the purines biosynthetic pathway. Catalyzes the ATP-dependent conversion of formylglycinamide ribonucleotide (FGAR) and glutamine to yield formylglycinamidine ribonucleotide (FGAM) and glutamate. The FGAM synthase complex is composed of three subunits. PurQ produces an ammonia molecule by converting glutamine to glutamate. PurL transfers the ammonia molecule to FGAR to form FGAM in an ATP-dependent manner. PurS interacts with PurQ and PurL and is thought to assist in the transfer of the ammonia molecule from PurQ to PurL. This is Phosphoribosylformylglycinamidine synthase subunit PurL from Saccharolobus solfataricus (strain ATCC 35092 / DSM 1617 / JCM 11322 / P2) (Sulfolobus solfataricus).